We begin with the raw amino-acid sequence, 182 residues long: Large ribosomal subunit protein uL5 (182 aa).

It belongs to the universal ribosomal protein uL5 family. In terms of assembly, part of the 50S ribosomal subunit; part of the 5S rRNA/L5/L18/L25 subcomplex. Contacts the 5S rRNA and the P site tRNA. Forms a bridge to the 30S subunit in the 70S ribosome.

Its function is as follows. This is one of the proteins that bind and probably mediate the attachment of the 5S RNA into the large ribosomal subunit, where it forms part of the central protuberance. In the 70S ribosome it contacts protein S13 of the 30S subunit (bridge B1b), connecting the 2 subunits; this bridge is implicated in subunit movement. Contacts the P site tRNA; the 5S rRNA and some of its associated proteins might help stabilize positioning of ribosome-bound tRNAs. This is Large ribosomal subunit protein uL5 from Borrelia turicatae (strain 91E135).